A 290-amino-acid polypeptide reads, in one-letter code: Glutaredoxin domain-containing cysteine-rich protein 1 (290 aa).

Residues 127-234 enclose the Glutaredoxin domain; the sequence is LQQPSTDLEF…DILTKIERVQ (108 aa).

The protein belongs to the GRXCR1 family. Expressed at low levels in adult lung, brain and duodenum with moderate levels in testis. Highly expressed in fetal cochlea.

It is found in the cell projection. The protein localises to the stereocilium. It localises to the microvillus. Its subcellular location is the kinocilium. Functionally, may play a role in actin filament architecture in developing stereocilia of sensory cells. This is Glutaredoxin domain-containing cysteine-rich protein 1 (GRXCR1) from Homo sapiens (Human).